The primary structure comprises 191 residues: Large ribosomal subunit protein bL9 (191 aa).

Residues 150-191 form a disordered region; sequence EAERQAKGESLTSADAIYGVDEDALRPEDFFDPDADRDGDDE. Over residues 179–191 the composition is skewed to acidic residues; sequence FFDPDADRDGDDE.

The protein belongs to the bacterial ribosomal protein bL9 family.

Its function is as follows. Binds to the 23S rRNA. This chain is Large ribosomal subunit protein bL9, found in Allorhizobium ampelinum (strain ATCC BAA-846 / DSM 112012 / S4) (Agrobacterium vitis (strain S4)).